Here is a 129-residue protein sequence, read N- to C-terminus: Small ribosomal subunit protein uS9 (129 aa).

It belongs to the universal ribosomal protein uS9 family.

This is Small ribosomal subunit protein uS9 from Pelodictyon phaeoclathratiforme (strain DSM 5477 / BU-1).